Here is a 596-residue protein sequence, read N- to C-terminus: Alpha-1,3-galactosidase A (596 aa).

The first 21 residues, M1 to A21, serve as a signal peptide directing secretion. Residues D23 to T57 are disordered. 4 PbH1 repeats span residues R351–G373, R482–D504, V515–P537, and H547–H569.

The protein belongs to the glycosyl hydrolase 110 family. A subfamily.

The catalysed reaction is Hydrolysis of terminal, non-reducing branched (1-&gt;3)-alpha-D-galactosidic residues, producing free D-galactose.. It catalyses the reaction Hydrolysis of terminal, non-reducing alpha-D-galactose residues in alpha-D-galactosides, including galactose oligosaccharides, galactomannans and galactolipids.. Functionally, alpha-galactosidase that specifically removes branched alpha-1,3-linked galactose residues present in blood group B antigens. Has no activity toward linear alpha-1,3-linked galactose residues. The sequence is that of Alpha-1,3-galactosidase A (glaA) from Akkermansia muciniphila (strain ATCC BAA-835 / DSM 22959 / JCM 33894 / BCRC 81048 / CCUG 64013 / CIP 107961 / Muc).